Here is a 943-residue protein sequence, read N- to C-terminus: MTQDYKATLHLPATDFPMRGDLPKREPAMLERWEREGLYAQVRANAAGRPLFVLHDGPPYANGQIHLGHAVNKILKDIIVKSKYLAGFDAPYIPGWDCHGLPIEIAIEKKFGKVGVKLDAAQFRQKCREYATEQIDLQRRDFKRLGVIGDWDNPYKTLDFRFEANEIRALAKVIDNGHLTRGVKPVHWCFDCGSALAEAEIEYADKVSPTVDIAYPARDPAAVAAAFGVTLSAGTQVAVPIWTTTPWTLPASLAVSLGAELDYVLVEGAADHGQPRWLVIAEALAGKALARYGVDAVVVHGHAKGAALDQLLLAHPFYAERDIPLILGDHVSDDDGTGAVHTAPGHGQEDYQVSKQYGLLERYSAAQINPIDGRGVYLPSTPPLGDTVLAGLHIWKANDVIIDALRDTGALLAASKMEHSYPHCWRHKTPIAFRATPQWFISMEQANLRADALKAIETVHWYPSWGQARIAGMIDGRPDWTISRQRTWGVPIALFVHRETGEPHPRSTELMRQVAERVEQGGVDVWYTLDAAELLGDEAGDYDKITDILDVWFDSGVTHETVLVDRGLPKPADLYLEGSDQHRGWFQSSLLTGVAMDKVAPYKQCLTHGFTVDEHGRKMSKSLGNGIEPQEIMRTLGADILRLWIASADYSNEMSLSQEILKRNADAYRRLRNTARFLLGNLHGFDPLQHLVALDDMVLLDRWIVHRAHELQEKITAAYARYDFAEIVQGLLNFCSVDLGSLYLDVTKDRLYTMAEDARGRRSAQSAMYHVAEAFVRWIAPVLSFTAEELWAYLPGEHSGNVLFATWYDGLAPMPADAALTSADVDKLLALREQVAKVLEPMRANGAIGAALEAEITVAADAQTAARWQPLSDELRFLFISGDVTVTAASTDDIFVSAQPTTKAKCVRCWHHQASVGSDPRHPELCSRCVSNIEGPGEERRWF.

The short motif at 59-69 is the 'HIGH' region element; that stretch reads PYANGQIHLGH. Glutamate 577 lines the L-isoleucyl-5'-AMP pocket. The 'KMSKS' region signature appears at 618–622; it reads KMSKS. Lysine 621 lines the ATP pocket. Residues cysteine 906, cysteine 909, cysteine 926, and cysteine 929 each contribute to the Zn(2+) site.

It belongs to the class-I aminoacyl-tRNA synthetase family. IleS type 1 subfamily. Monomer. Requires Zn(2+) as cofactor.

The protein resides in the cytoplasm. It catalyses the reaction tRNA(Ile) + L-isoleucine + ATP = L-isoleucyl-tRNA(Ile) + AMP + diphosphate. In terms of biological role, catalyzes the attachment of isoleucine to tRNA(Ile). As IleRS can inadvertently accommodate and process structurally similar amino acids such as valine, to avoid such errors it has two additional distinct tRNA(Ile)-dependent editing activities. One activity is designated as 'pretransfer' editing and involves the hydrolysis of activated Val-AMP. The other activity is designated 'posttransfer' editing and involves deacylation of mischarged Val-tRNA(Ile). In Xanthomonas campestris pv. campestris (strain B100), this protein is Isoleucine--tRNA ligase.